Reading from the N-terminus, the 275-residue chain is NH(3)-dependent NAD(+) synthetase (275 aa).

ATP is bound at residue 46–53; sequence GISGGQDS. A Mg(2+)-binding site is contributed by Asp52. Arg140 contributes to the deamido-NAD(+) binding site. Thr160 lines the ATP pocket. Residue Glu165 participates in Mg(2+) binding. Positions 173 and 180 each coordinate deamido-NAD(+). Lys189 and Thr211 together coordinate ATP. 260–261 lines the deamido-NAD(+) pocket; the sequence is HK.

It belongs to the NAD synthetase family. Homodimer.

It carries out the reaction deamido-NAD(+) + NH4(+) + ATP = AMP + diphosphate + NAD(+) + H(+). It participates in cofactor biosynthesis; NAD(+) biosynthesis; NAD(+) from deamido-NAD(+) (ammonia route): step 1/1. Functionally, catalyzes the ATP-dependent amidation of deamido-NAD to form NAD. Uses ammonia as a nitrogen source. The chain is NH(3)-dependent NAD(+) synthetase from Salmonella enteritidis PT4 (strain P125109).